A 318-amino-acid polypeptide reads, in one-letter code: Probable metal transport system membrane protein CT_070 (318 aa).

The next 10 helical transmembrane spans lie at 1–21, 39–59, 64–84, 94–114, 124–144, 170–190, 196–216, 226–246, 252–272, and 285–305; these read MVAS…LVFF, IQVI…TFLV, AMYA…VCLF, QALT…IHFI, ASTA…LVFL, IFLV…SFVC, IFAF…MLLL, AVGV…AKLI, EMMV…PALS, and TSGL…VFVC.

The protein belongs to the ABC-3 integral membrane protein family.

It is found in the cell inner membrane. In terms of biological role, part of an ATP-driven transport system CT_067/CT_068/CT_069/CT_070 for a metal. In Chlamydia trachomatis serovar D (strain ATCC VR-885 / DSM 19411 / UW-3/Cx), this protein is Probable metal transport system membrane protein CT_070.